A 953-amino-acid chain; its full sequence is Nucleotide-binding oligomerization domain-containing protein 1 (953 aa).

A CARD domain is found at 15-107; that stretch reads GCHSHIKLLK…VDLRLWLSEI (93 aa). The NACHT domain maps to 196 to 531; sequence ETVFVFGDAG…AFFTAFFLVA (336 aa). Residue 202–209 participates in ATP binding; the sequence is GDAGVGKS. 2 S-palmitoyl cysteine lipidation sites follow: cysteine 558 and cysteine 567. 8 LRR repeats span residues 702 to 725, 727 to 750, 755 to 778, 783 to 806, 839 to 862, 867 to 890, 895 to 918, and 923 to 946; these read FHRQ…ELQP, FSRL…VLCE, YKIV…YVAQ, CRGL…CVAL, HPSL…SLAQ, NTTL…CFAE, NQTL…QLAR, and NTAI…VFEN. Residue cysteine 952 is the site of S-palmitoyl cysteine attachment.

The protein belongs to the NOD1-NOD2 family. Homooligomer: homooligomerizes following ligand-binding, promoting RIPK2 recruitment. Interacts (via CARD domain) with RIPK2 (via CARD domain). Following RIPK2 recruitment, RIPK2 homooligomerizes via its CARD domain and forms long filaments named RIPosomes. Interacts (via CARD domain) with ubiquitin; inhibiting interaction with RIPK2. Interacts with ARHGEF2. Interacts with NLRP10 and recruits it to the cell membrane following invasive bacterial infection. Interacts with IFIH1; this interaction promotes transcription of antiviral genes and inhibition of viral replication. Interacts with Irgm1; promoting NOD1 degradation. Interacts with ATG16L1. In terms of processing, ubiquitinated. 'Lys-48'-linked polyubiquitination by RNF34 promotes proteasomal degradation and thereby negatively regulates NOD1 for instance in NF-kappa-B activation. Palmitoylated. Palmitoylation is required for proper recruitment to the bacterial entry site and hence for proper signaling upon cognate peptidoglycan detection. Post-translationally, degraded via selective autophagy following interaction with Irgm1. Irgm1 promotes NOD1-RIPK2 RIPosome recruitment to autophagosome membranes, promoting their SQSTM1/p62-dependent autophagic degradation. Although ubiquitously expressed, NOD1 levels are more abundant in immune cells, the gastrointestinal tract, and adipose tissue.

The protein localises to the cell membrane. It localises to the apical cell membrane. The protein resides in the basolateral cell membrane. Its subcellular location is the cytoplasm. Pattern recognition receptor (PRR) that detects bacterial peptidoglycan fragments and other danger signals and thus participates in both innate and adaptive immune responses. Specifically recognizes and binds gamma-D-glutamyl-meso-diaminopimelic acid (iE-DAP), a dipeptide present in peptidoglycan of Gram-negative bacteria. Preferentially binds iE-DAP in tetrapeptide-containing muropeptides (MurNAc-TetraDAP or TetraDAP). Ligand binding triggers oligomerization that facilitates the binding and subsequent activation of the proximal adapter receptor-interacting RIPK2. Following recruitment, RIPK2 undergoes 'Met-1'- (linear) and 'Lys-63'-linked polyubiquitination by E3 ubiquitin-protein ligases XIAP, BIRC2, BIRC3 and the LUBAC complex, becoming a scaffolding protein for downstream effectors, triggering activation of the NF-kappa-B and MAP kinases signaling. This in turn leads to the transcriptional activation of hundreds of genes involved in immune response. Also acts as a regulator of antiviral response elicited by dsRNA and the expression of RLR pathway members by targeting IFIH1 and TRAF3 to modulate the formation of IFIH1-MAVS and TRAF3-MAVS complexes leading to increased transcription of type I IFNs. Also acts as a regulator of autophagy via its interaction with ATG16L1, possibly by recruiting ATG16L1 at the site of bacterial entry. Besides recognizing pathogens, also involved in the endoplasmic reticulum stress response: acts by sensing and binding to the cytosolic metabolite sphingosine-1-phosphate generated in response to endoplasmic reticulum stress, initiating an inflammation process that leads to activation of the NF-kappa-B and MAP kinases signaling. In addition, plays a role in insulin trafficking in beta cells in a cell-autonomous manner. Mechanistically, upon recognizing cognate ligands, NOD1 and RIPK2 localize to insulin vesicles where they recruit RAB1A to direct insulin trafficking through the cytoplasm. The chain is Nucleotide-binding oligomerization domain-containing protein 1 from Mus musculus (Mouse).